The following is a 539-amino-acid chain: Cytochrome c oxidase subunit 1 homolog, bacteroid (539 aa).

The next 3 helical transmembrane spans lie at 4-24, 28-48, and 75-95; these read TVEM…AGLA, LFGA…LVLM, and GVVA…VVAL. H117 provides a ligand contact to heme b. 8 helical membrane passes run 118–138, 154–174, 187–207, 214–234, 265–285, 298–318, 330–350, and 368–388; these read TSAV…FYVV, FVFW…LLGI, VDLW…GTIM, IYVA…LHVV, GHNA…YYFI, LSII…PHHL, LGMV…INGL, and MMVM…MMSI. Positions 266, 316, and 317 each coordinate Cu cation. Heme b contacts are provided by H404 and H406. A run of 4 helical transmembrane segments spans residues 405–425, 443–463, 475–495, and 499–519; these read VHSG…YYLV, HFWL…VAGI, QGFL…YYVM, and GGAL…MTIL.

It belongs to the heme-copper respiratory oxidase family. It depends on Cu(2+) as a cofactor. Heme b is required as a cofactor.

It is found in the cell membrane. It catalyses the reaction 4 Fe(II)-[cytochrome c] + O2 + 8 H(+)(in) = 4 Fe(III)-[cytochrome c] + 2 H2O + 4 H(+)(out). It participates in energy metabolism; oxidative phosphorylation. Cytochrome c oxidase is the component of the respiratory chain that catalyzes the reduction of oxygen to water. Subunits 1-3 form the functional core of the enzyme complex. Co I is the catalytic subunit of the enzyme. Electrons originating in cytochrome c or a quinol are transferred to the bimetallic center formed by a high-spin heme and copper B. The sequence is that of Cytochrome c oxidase subunit 1 homolog, bacteroid (fixN) from Rhizobium meliloti (strain 1021) (Ensifer meliloti).